The primary structure comprises 218 residues: Octanoyltransferase (218 aa).

Residues 32–218 enclose the BPL/LPL catalytic domain; it reads GDAPEAVWLL…LRTFSRSFPD (187 aa). Substrate-binding positions include 71 to 78, 151 to 153, and 164 to 166; these read RGGQYTYH, AIG, and GLS. Residue C182 is the Acyl-thioester intermediate of the active site.

It belongs to the LipB family.

It is found in the cytoplasm. It catalyses the reaction octanoyl-[ACP] + L-lysyl-[protein] = N(6)-octanoyl-L-lysyl-[protein] + holo-[ACP] + H(+). Its pathway is protein modification; protein lipoylation via endogenous pathway; protein N(6)-(lipoyl)lysine from octanoyl-[acyl-carrier-protein]: step 1/2. In terms of biological role, catalyzes the transfer of endogenously produced octanoic acid from octanoyl-acyl-carrier-protein onto the lipoyl domains of lipoate-dependent enzymes. Lipoyl-ACP can also act as a substrate although octanoyl-ACP is likely to be the physiological substrate. This Cereibacter sphaeroides (strain ATCC 17025 / ATH 2.4.3) (Rhodobacter sphaeroides) protein is Octanoyltransferase.